Consider the following 73-residue polypeptide: uncharacterized protein (73 aa).

A signal peptide spans 1–28; sequence MKFLLSVIAGLLILALYLFWKVQPPVWI.

This is an uncharacterized protein from Bacillus subtilis (strain 168).